A 75-amino-acid chain; its full sequence is Exodeoxyribonuclease 7 small subunit (75 aa).

It belongs to the XseB family. In terms of assembly, heterooligomer composed of large and small subunits.

It localises to the cytoplasm. It carries out the reaction Exonucleolytic cleavage in either 5'- to 3'- or 3'- to 5'-direction to yield nucleoside 5'-phosphates.. In terms of biological role, bidirectionally degrades single-stranded DNA into large acid-insoluble oligonucleotides, which are then degraded further into small acid-soluble oligonucleotides. The chain is Exodeoxyribonuclease 7 small subunit from Citrifermentans bemidjiense (strain ATCC BAA-1014 / DSM 16622 / JCM 12645 / Bem) (Geobacter bemidjiensis).